Reading from the N-terminus, the 752-residue chain is Palmitoyltransferase AKR1 (752 aa).

Disordered regions lie at residues 1-21 and 49-68; these read MTAEEVDKESDPAIEDVKSDY and ASSELKHENDQGEERDLGSV. Over 1 to 318 the chain is Cytoplasmic; sequence MTAEEVDKES…FPLPQYFSAS (318 aa). Basic and acidic residues-rich tracts occupy residues 9-21 and 51-68; these read ESDPAIEDVKSDY and SELKHENDQGEERDLGSV. ANK repeat units follow at residues 72-102, 108-137, 142-171, 175-208, 212-241, and 245-274; these read PILERYHAACKQGDMKTLREMVESKVIDLSN, ERVSGLHWACINNRLSAVKYLAGAGAEVNF, LDATPLHWASKSGLVYIVDELLKAGADPNI, QGYNLLHTSVFSSNIMLVIYVLFFVVDGKEDVDQ, HQRTALQWATYQADALTVENLLKFNADVKN, and AGFTALHWGTVKGSIPVMDLLIKHGSDFFQ. The chain crosses the membrane as a helical span at residues 319–339; sequence TGKMLTFFLPWVLIPLVFYIF. Residues 340-341 lie on the Lumenal side of the membrane; it reads SK. The chain crosses the membrane as a helical span at residues 342 to 362; it reads ITFFIALLINTIVLVISGLVL. At 363–380 the chain is on the cytoplasmic side; it reads SRLVVPSYLLSKRHPILN. Residues 381 to 401 form a helical membrane-spanning segment; that stretch reads SPLLAGILSGTIAIAFFIWFT. Residues 402 to 412 lie on the Lumenal side of the membrane; that stretch reads KISILTFTEKP. A helical transmembrane segment spans residues 413–433; the sequence is VGNIIMLGFFIGLITLFIGLM. Topologically, residues 434-509 are cytoplasmic; that stretch reads KSDPGYIPGT…YNQIGLLNHK (76 aa). The 51-residue stretch at 466–516 folds into the DHHC domain; that stretch reads HFCVHTWIRIPLRSKYDRDSACLISAFDHFCPWVYNQIGLLNHKLFYMFVV. C496 acts as the S-palmitoyl cysteine intermediate in catalysis. The chain crosses the membrane as a helical span at residues 510–530; that stretch reads LFYMFVVLLEISVWWFLPLMM. Residues 531 to 567 lie on the Lumenal side of the membrane; it reads EYFDELEDYLENRKGKHFGDCHFLGDEDLCFGLHHDT. The helical transmembrane segment at 568–588 threads the bilayer; sequence FNFLLLCWVIFQAFWVLCLIA. The Cytoplasmic portion of the chain corresponds to 589 to 752; it reads VQTVQMLKGV…TLPNATEELV (164 aa).

It belongs to the DHHC palmitoyltransferase family. AKR/ZDHHC17 subfamily.

Its subcellular location is the early endosome membrane. It is found in the golgi apparatus membrane. The enzyme catalyses L-cysteinyl-[protein] + hexadecanoyl-CoA = S-hexadecanoyl-L-cysteinyl-[protein] + CoA. Its function is as follows. Palmitoyltransferase specific for casein kinase 1. This Kluyveromyces lactis (strain ATCC 8585 / CBS 2359 / DSM 70799 / NBRC 1267 / NRRL Y-1140 / WM37) (Yeast) protein is Palmitoyltransferase AKR1 (AKR1).